The following is a 460-amino-acid chain: UDP-N-acetylmuramoyl-tripeptide--D-alanyl-D-alanine ligase (460 aa).

Residue 115–121 (GSSGKTS) participates in ATP binding.

Belongs to the MurCDEF family. MurF subfamily.

It is found in the cytoplasm. The enzyme catalyses D-alanyl-D-alanine + UDP-N-acetyl-alpha-D-muramoyl-L-alanyl-gamma-D-glutamyl-meso-2,6-diaminopimelate + ATP = UDP-N-acetyl-alpha-D-muramoyl-L-alanyl-gamma-D-glutamyl-meso-2,6-diaminopimeloyl-D-alanyl-D-alanine + ADP + phosphate + H(+). It functions in the pathway cell wall biogenesis; peptidoglycan biosynthesis. Its function is as follows. Involved in cell wall formation. Catalyzes the final step in the synthesis of UDP-N-acetylmuramoyl-pentapeptide, the precursor of murein. This chain is UDP-N-acetylmuramoyl-tripeptide--D-alanyl-D-alanine ligase, found in Buchnera aphidicola subsp. Baizongia pistaciae (strain Bp).